We begin with the raw amino-acid sequence, 858 residues long: DNA mismatch repair protein MutS (858 aa).

Residue 600 to 607 (GPNMSGKS) participates in ATP binding. A disordered region spans residues 803–823 (EAASDEVDDNNSENSPMTDAE).

The protein belongs to the DNA mismatch repair MutS family.

Its function is as follows. This protein is involved in the repair of mismatches in DNA. It is possible that it carries out the mismatch recognition step. This protein has a weak ATPase activity. In Lactobacillus helveticus (strain DPC 4571), this protein is DNA mismatch repair protein MutS.